The primary structure comprises 187 residues: dCTP deaminase, dUMP-forming (187 aa).

DCTP-binding positions include 101 to 106 (KSSLGR) and Asp119. The Proton donor/acceptor role is filled by Glu129. Positions 148, 162, and 174 each coordinate dCTP.

This sequence belongs to the dCTP deaminase family. As to quaternary structure, homotrimer.

The catalysed reaction is dCTP + 2 H2O = dUMP + NH4(+) + diphosphate. The protein operates within pyrimidine metabolism; dUMP biosynthesis; dUMP from dCTP: step 1/1. Functionally, bifunctional enzyme that catalyzes both the deamination of dCTP to dUTP and the hydrolysis of dUTP to dUMP without releasing the toxic dUTP intermediate. The protein is dCTP deaminase, dUMP-forming of Corynebacterium kroppenstedtii (strain DSM 44385 / JCM 11950 / CIP 105744 / CCUG 35717).